A 122-amino-acid chain; its full sequence is uncharacterized protein (122 aa).

Residues 1-20 (MGFHFCIWIIFLLPPPCKKC) form the signal peptide.

It is found in the secreted. This is an uncharacterized protein from Homo sapiens (Human).